The sequence spans 157 residues: uncharacterized protein (157 aa).

An N-terminal signal peptide occupies residues 1 to 26 (MEALRRAHEVALRLLLCRPWASRAAA).

Its subcellular location is the secreted. This is an uncharacterized protein from Homo sapiens (Human).